We begin with the raw amino-acid sequence, 330 residues long: Delta-aminolevulinic acid dehydratase (330 aa).

Cys-122, Cys-124, His-131, and Cys-132 together coordinate Zn(2+). Residue Lys-199 is the Schiff-base intermediate with substrate of the active site. Lys-199 is modified (N6-succinyllysine). Arg-209 is a 5-aminolevulinate binding site. Ser-215 bears the Phosphoserine mark. Residue Arg-221 participates in 5-aminolevulinate binding. Cys-223 contributes to the Zn(2+) binding site. Lys-252 serves as the catalytic Schiff-base intermediate with substrate. N6-succinyllysine is present on Lys-252. 5-aminolevulinate is bound by residues Ser-279 and Tyr-318.

The protein belongs to the ALAD family. Homooctamer; active form. Homohexamer; low activity form. It depends on Zn(2+) as a cofactor.

The protein localises to the cytoplasm. The protein resides in the cytosol. It catalyses the reaction 2 5-aminolevulinate = porphobilinogen + 2 H2O + H(+). The protein operates within porphyrin-containing compound metabolism; protoporphyrin-IX biosynthesis; coproporphyrinogen-III from 5-aminolevulinate: step 1/4. Its activity is regulated as follows. Can alternate between a fully active homooctamer and a low-activity homohexamer. A bound magnesium ion may promote the assembly of the fully active homooctamer. The magnesium-binding site is absent in the low-activity homohexamer. Inhibited by compounds that favor the hexameric state. Inhibited by divalent lead ions. The lead ions partially displace the zinc cofactor. In terms of biological role, catalyzes an early step in the biosynthesis of tetrapyrroles. Binds two molecules of 5-aminolevulinate per subunit, each at a distinct site, and catalyzes their condensation to form porphobilinogen. The polypeptide is Delta-aminolevulinic acid dehydratase (Alad) (Mus musculus (Mouse)).